Here is a 444-residue protein sequence, read N- to C-terminus: Tryptophan 5-hydroxylase 1 (444 aa).

One can recognise an ACT domain in the interval 19 to 94; it reads SLIFSLKNEV…NVLSVNLPDN (76 aa). Residue Ser58 is modified to Phosphoserine; by PKA. L-tryptophan contacts are provided by Tyr235, Arg257, and Thr265. 3 residues coordinate Fe cation: His272, His277, and Glu317. L-tryptophan is bound by residues Ser336 and Ile366.

Belongs to the biopterin-dependent aromatic amino acid hydroxylase family. In terms of assembly, homotetramer. Interacts with DNAJC12. The cofactor is Fe(2+). Ubiquitinated, leading to its degradation by the proteasome. Ubiquitinated is triggered by phosphorylation. Post-translationally, phosphorylated; triggering degradation by the proteasome. As to expression, seems to be less widely expressed than isoform 1.

The enzyme catalyses (6R)-L-erythro-5,6,7,8-tetrahydrobiopterin + L-tryptophan + O2 = 5-hydroxy-L-tryptophan + (4aS,6R)-4a-hydroxy-L-erythro-5,6,7,8-tetrahydrobiopterin. Its pathway is aromatic compound metabolism; serotonin biosynthesis; serotonin from L-tryptophan: step 1/2. In terms of biological role, oxidizes L-tryptophan to 5-hydroxy-l-tryptophan in the rate-determining step of serotonin biosynthesis. This is Tryptophan 5-hydroxylase 1 (TPH1) from Homo sapiens (Human).